Consider the following 498-residue polypeptide: Actin-binding protein WASF2 (498 aa).

2 disordered regions span residues 173–203 and 240–435; these read KEKRKHRKEKKDNPNRGNVNPRKIKTRKEEW and NVDA…AVSD. Low complexity predominate over residues 252-263; the sequence is SDSASSPSPSFS. Pro residues predominate over residues 298-407; sequence SHPPPAPPLG…PPPGPPPPPF (110 aa). The 18-residue stretch at 436–453 folds into the WH2 domain; the sequence is ARSDLLSAIRQGFQLRRV. Ser-474 is modified (phosphoserine).

This sequence belongs to the SCAR/WAVE family. As to quaternary structure, binds actin and the Arp2/3 complex. Interacts with BAIAP2. Component of the WAVE2 complex composed of ABI1, CYFIP1/SRA1, NCKAP1/NAP1 (NCKAP1l/HEM1 in hematopoietic cells) and WASF2/WAVE2. Directly interacts with BRK1. Interacts with FNBP1L (via the SH3 domain). (Microbial infection) Interacts with human cytomegalovirus protein UL135. Expressed in all tissues with strongest expression in placenta, lung, and peripheral blood leukocytes, but not in skeletal muscle.

The protein resides in the cytoplasm. It localises to the cytoskeleton. Its subcellular location is the cell projection. The protein localises to the lamellipodium. It is found in the basolateral cell membrane. Its function is as follows. Downstream effector molecule involved in the transmission of signals from tyrosine kinase receptors and small GTPases to the actin cytoskeleton. Promotes formation of actin filaments. Part of the WAVE complex that regulates lamellipodia formation. The WAVE complex regulates actin filament reorganization via its interaction with the Arp2/3 complex. This Homo sapiens (Human) protein is Actin-binding protein WASF2.